Reading from the N-terminus, the 507-residue chain is MMQLKLEHYNIKIGQHKVLLNIVDAKELGVNPGDRVRIRGHQSLSAIVDTTDDMVPPGTLGVFTEVYEHFEDWDKPVEVVPSFRSKSAAVIKKMLDKKPVVQDEIKMLVSDIVDENLSDVELSAFITASYIHGMTDDEVEWLTRAMIDTGDTIEFDTHPIMDKHSIGGVPGNKISLLIVPIVAANGLLIPKTSSRAITGAGGTADLMEVLSPVEFSSQEVKEITEKVGGALVWGGATNIAPADDKLIKIEYPLSIDPYYQMLASIMAKKGAIGADNVVMDIPVGPGTKVPTVQEGQKLARDLINLGHRLGMNVECAITYGSSPIGRRVGPSLEVKEAMKVLESMEGPNSLIEKSAALAGILLEMGGAAPRDQGKELALETLRSGKALEKMKQIIEAQGGDPNIKSDDIQTGQYTADIFASTDGYVMEFDNKWIIEIARLAGAPNDKGAGVAIHKKRGEQVKKGDPILTIYAEKEIKLDNALATAQRTNPIIVEGMLLRRIPGTYGFQ.

Residues glycine 168, 194-199 (SRAITG), and threonine 203 each bind AMP. Aspartate 256 functions as the Proton donor in the catalytic mechanism. Serine 264 and lysine 288 together coordinate AMP.

This sequence belongs to the thymidine/pyrimidine-nucleoside phosphorylase family. Type 2 subfamily.

It catalyses the reaction AMP + phosphate = alpha-D-ribose 1,5-bisphosphate + adenine. The catalysed reaction is CMP + phosphate = cytosine + alpha-D-ribose 1,5-bisphosphate. The enzyme catalyses UMP + phosphate = alpha-D-ribose 1,5-bisphosphate + uracil. In terms of biological role, catalyzes the conversion of AMP and phosphate to adenine and ribose 1,5-bisphosphate (R15P). Exhibits phosphorylase activity toward CMP and UMP in addition to AMP. Functions in an archaeal AMP degradation pathway, together with R15P isomerase and RubisCO. The chain is AMP phosphorylase from Methanosarcina mazei (strain ATCC BAA-159 / DSM 3647 / Goe1 / Go1 / JCM 11833 / OCM 88) (Methanosarcina frisia).